A 211-amino-acid polypeptide reads, in one-letter code: FMN-dependent NADH:quinone oxidoreductase (211 aa).

Residues Ser-10, 16–18, and 138–141 contribute to the FMN site; these read STS and TQGG.

It belongs to the azoreductase type 1 family. In terms of assembly, homodimer. FMN serves as cofactor.

The enzyme catalyses 2 a quinone + NADH + H(+) = 2 a 1,4-benzosemiquinone + NAD(+). The catalysed reaction is N,N-dimethyl-1,4-phenylenediamine + anthranilate + 2 NAD(+) = 2-(4-dimethylaminophenyl)diazenylbenzoate + 2 NADH + 2 H(+). Its function is as follows. Quinone reductase that provides resistance to thiol-specific stress caused by electrophilic quinones. In terms of biological role, also exhibits azoreductase activity. Catalyzes the reductive cleavage of the azo bond in aromatic azo compounds to the corresponding amines. The sequence is that of FMN-dependent NADH:quinone oxidoreductase from Frankia alni (strain DSM 45986 / CECT 9034 / ACN14a).